A 135-amino-acid chain; its full sequence is Transmembrane protein 107 (135 aa).

Helical transmembrane passes span 7–27 (LVPA…TIFW), 55–75 (VALS…LSGV), 83–103 (ALLS…FVFH), and 110–130 (YWII…FLLL).

The protein resides in the membrane. May play a role in cilia formation and embryonic patterning. This is Transmembrane protein 107 (tmem107) from Danio rerio (Zebrafish).